The following is a 428-amino-acid chain: Probable anion transporter 6 (428 aa).

The first 22 residues, 1–22 (MKFPKRYAIVLLTFMCTNVCYI), serve as a signal peptide directing secretion. The next 11 membrane-spanning stretches (helical) occupy residues 47–67 (MILS…GWAA), 74–94 (LVLL…PLDP), 98–118 (ILLV…FPSI), 137–157 (LTTS…PSLV), 164–184 (SVFS…FKFA), 221–241 (ILFS…HYAL), 269–289 (LPYL…DHLI), 301–321 (KLLN…LPLF), 327–347 (AIFC…GFAV), 356–376 (FAGI…IVGV), and 401–421 (TVFF…LIFS).

This sequence belongs to the major facilitator superfamily. Sodium/anion cotransporter (TC 2.A.1.14) family.

The protein resides in the cell membrane. Its function is as follows. Probable anion transporter. The protein is Probable anion transporter 6 (PHT4;6) of Oryza sativa subsp. japonica (Rice).